Here is a 275-residue protein sequence, read N- to C-terminus: Tumor necrosis factor receptor superfamily member 14 (275 aa).

Positions M1 to A38 are cleaved as a signal peptide. TNFR-Cys repeat units follow at residues S41–C75, P77–C119, and R120–C162. Intrachain disulfides connect C42–C53, C54–C67, C57–C75, C78–C93, C96–C111, C99–C119, C121–C138, and C144–C162. N-linked (GlcNAc...) asparagine glycans are attached at residues N184 and N197. Residues V211 to C231 form a helical membrane-spanning segment.

Belongs to the tumor necrosis factor receptor superfamily. In terms of assembly, interacts with TRAF2, TRAF3 and TRAF5. Interacts (via CRD1/TNFR-Cys 1) with CD160; this interaction is direct. Interacts (via CRD1/TNFR-Cys 1) with BTLA; this interaction is direct. Post-translationally, N-glycosylated. In terms of tissue distribution, expressed at mucosal sites including colon and pulmonary epithelial cells. Expressed in naive T cells.

Its subcellular location is the cell membrane. Receptor for four distinct ligands: The TNF superfamily members TNFSF14/LIGHT and homotrimeric LTA/lymphotoxin-alpha and the immunoglobulin superfamily members BTLA and CD160, altogether defining a complex stimulatory and inhibitory signaling network. Signals via the TRAF2-TRAF3 E3 ligase pathway to promote immune cell survival and differentiation. Participates in bidirectional cell-cell contact signaling between antigen presenting cells and lymphocytes. In response to ligation of TNFSF14/LIGHT, delivers costimulatory signals to T cells, promoting cell proliferation and effector functions. Interacts with CD160 on NK cells, enhancing IFNG production and anti-tumor immune response. In the context of bacterial infection, acts as a signaling receptor on epithelial cells for CD160 from intraepithelial lymphocytes, triggering the production of antimicrobial proteins and pro-inflammatory cytokines. Upon binding to CD160 on activated CD4+ T cells, down-regulates CD28 costimulatory signaling, restricting memory and alloantigen-specific immune response. May interact in cis (on the same cell) or in trans (on other cells) with BTLA. In cis interactions, appears to play an immune regulatory role inhibiting in trans interactions in naive T cells to maintain a resting state. In trans interactions, can predominate during adaptive immune response to provide survival signals to effector T cells. This Mus musculus (Mouse) protein is Tumor necrosis factor receptor superfamily member 14.